Consider the following 165-residue polypeptide: Large ribosomal subunit protein uL10 (165 aa).

This sequence belongs to the universal ribosomal protein uL10 family. Part of the ribosomal stalk of the 50S ribosomal subunit. The N-terminus interacts with L11 and the large rRNA to form the base of the stalk. The C-terminus forms an elongated spine to which L12 dimers bind in a sequential fashion forming a multimeric L10(L12)X complex.

Forms part of the ribosomal stalk, playing a central role in the interaction of the ribosome with GTP-bound translation factors. The polypeptide is Large ribosomal subunit protein uL10 (Buchnera aphidicola subsp. Acyrthosiphon pisum (strain 5A)).